Consider the following 130-residue polypeptide: Small ribosomal subunit protein uS8 (130 aa).

The protein belongs to the universal ribosomal protein uS8 family. Part of the 30S ribosomal subunit. Contacts proteins S5 and S12.

One of the primary rRNA binding proteins, it binds directly to 16S rRNA central domain where it helps coordinate assembly of the platform of the 30S subunit. This is Small ribosomal subunit protein uS8 from Enterobacter sp. (strain 638).